Here is a 174-residue protein sequence, read N- to C-terminus: Shikimate kinase 2 (174 aa).

Residue 12-17 (GCGKTT) coordinates ATP. Residues T16 and D32 each coordinate Mg(2+). Residues D34, R58, and G79 each contribute to the substrate site. Positions 112–126 (QAAPEEDLRPTLTGK) are LID domain. Residue R120 coordinates ATP. R139 is a binding site for substrate.

Belongs to the shikimate kinase family. AroL subfamily. In terms of assembly, monomer. Mg(2+) serves as cofactor.

Its subcellular location is the cytoplasm. The enzyme catalyses shikimate + ATP = 3-phosphoshikimate + ADP + H(+). It functions in the pathway metabolic intermediate biosynthesis; chorismate biosynthesis; chorismate from D-erythrose 4-phosphate and phosphoenolpyruvate: step 5/7. Its function is as follows. Catalyzes the specific phosphorylation of the 3-hydroxyl group of shikimic acid using ATP as a cosubstrate. The protein is Shikimate kinase 2 of Escherichia coli O1:K1 / APEC.